Here is a 393-residue protein sequence, read N- to C-terminus: NAD(P)H-quinone oxidoreductase subunit H, chloroplastic (393 aa).

Belongs to the complex I 49 kDa subunit family. NDH is composed of at least 16 different subunits, 5 of which are encoded in the nucleus.

It localises to the plastid. Its subcellular location is the chloroplast thylakoid membrane. It carries out the reaction a plastoquinone + NADH + (n+1) H(+)(in) = a plastoquinol + NAD(+) + n H(+)(out). It catalyses the reaction a plastoquinone + NADPH + (n+1) H(+)(in) = a plastoquinol + NADP(+) + n H(+)(out). In terms of biological role, NDH shuttles electrons from NAD(P)H:plastoquinone, via FMN and iron-sulfur (Fe-S) centers, to quinones in the photosynthetic chain and possibly in a chloroplast respiratory chain. The immediate electron acceptor for the enzyme in this species is believed to be plastoquinone. Couples the redox reaction to proton translocation, and thus conserves the redox energy in a proton gradient. This chain is NAD(P)H-quinone oxidoreductase subunit H, chloroplastic, found in Oryza nivara (Indian wild rice).